Here is a 122-residue protein sequence, read N- to C-terminus: Large ribosomal subunit protein uL22 (122 aa).

The segment at 102-122 is disordered; it reads VAEGKEMKSSKSHKKNQAEGK.

Belongs to the universal ribosomal protein uL22 family. As to quaternary structure, part of the 50S ribosomal subunit.

In terms of biological role, this protein binds specifically to 23S rRNA; its binding is stimulated by other ribosomal proteins, e.g. L4, L17, and L20. It is important during the early stages of 50S assembly. It makes multiple contacts with different domains of the 23S rRNA in the assembled 50S subunit and ribosome. Its function is as follows. The globular domain of the protein is located near the polypeptide exit tunnel on the outside of the subunit, while an extended beta-hairpin is found that lines the wall of the exit tunnel in the center of the 70S ribosome. This is Large ribosomal subunit protein uL22 from Helicobacter pylori (strain HPAG1).